The following is a 124-amino-acid chain: Small ribosomal subunit protein uS12 (124 aa).

D89 is subject to 3-methylthioaspartic acid.

Belongs to the universal ribosomal protein uS12 family. Part of the 30S ribosomal subunit. Contacts proteins S8 and S17. May interact with IF1 in the 30S initiation complex.

In terms of biological role, with S4 and S5 plays an important role in translational accuracy. Its function is as follows. Interacts with and stabilizes bases of the 16S rRNA that are involved in tRNA selection in the A site and with the mRNA backbone. Located at the interface of the 30S and 50S subunits, it traverses the body of the 30S subunit contacting proteins on the other side and probably holding the rRNA structure together. The combined cluster of proteins S8, S12 and S17 appears to hold together the shoulder and platform of the 30S subunit. The chain is Small ribosomal subunit protein uS12 from Serratia proteamaculans (strain 568).